A 602-amino-acid polypeptide reads, in one-letter code: Sodium- and chloride-dependent GABA transporter 2 (602 aa).

Topologically, residues 1–40 (MENRASGTTSNGETKPVCPAMEKVEEDGTLEREHWNNKME) are cytoplasmic. Helical transmembrane passes span 41–61 (FVLS…FPYL), 68–88 (GAFF…VFFL), and 121–141 (IVSL…FYLF). Residues 142-206 (SSFTTDLPWG…GIQHLGSLRW (65 aa)) are Extracellular-facing. A disulfide bridge links cysteine 153 with cysteine 162. N-linked (GlcNAc...) asparagine glycans are attached at residues asparagine 169, asparagine 173, and asparagine 178. A run of 2 helical transmembrane segments spans residues 207 to 227 (ELVL…WKGV) and 233 to 253 (VVYF…IRGV). Residue asparagine 269 is glycosylated (N-linked (GlcNAc...) asparagine). Helical transmembrane passes span 282-302 (AGTQ…ALGS), 319-339 (ILNS…LGFM), 366-386 (VVML…VVLL), 418-438 (VLIL…LTEG), 453-473 (GMCL…VYGA), 490-510 (PLIK…TFLF), and 528-548 (WWGD…IPAW). Topologically, residues 549-602 (SIYKLRTLKGPLRERLRQLVCPAEDLPQKNQPEPTAPATPMTSLLRLTELESNC) are cytoplasmic. Threonine 587 is subject to Phosphothreonine. Phosphoserine is present on serine 591.

Belongs to the sodium:neurotransmitter symporter (SNF) (TC 2.A.22) family. SLC6A13 subfamily. In terms of tissue distribution, expressed at high levels in liver, followed by kidney and leptomeninges, and very low levels in the cerebellum (at protein level). In the brain, detected in some blood vessels (at protein level). In the kidney, expressed in the cortex, including parts of the proximal tubules, but not in the medulla (at protein level). In the liver, highest expression in periportal hepatocytes, with highest density at the vascular side (at protein level). Also detected at low levels in other organs, including skeletal muscle.

Its subcellular location is the cell membrane. The protein localises to the basolateral cell membrane. It catalyses the reaction 4-aminobutanoate(out) + chloride(out) + 2 Na(+)(out) = 4-aminobutanoate(in) + chloride(in) + 2 Na(+)(in). It carries out the reaction taurine(out) + chloride(out) + 2 Na(+)(out) = taurine(in) + chloride(in) + 2 Na(+)(in). The enzyme catalyses beta-alanine(out) + chloride(out) + 2 Na(+)(out) = beta-alanine(in) + chloride(in) + 2 Na(+)(in). The catalysed reaction is hypotaurine(out) + chloride(out) + 2 Na(+)(out) = hypotaurine(in) + chloride(in) + 2 Na(+)(in). With respect to regulation, gamma-aminobutyric acid (GABA) transport is inhibited by beta-alanine, taurine, hypotaurine, beta-guanidinopropionic acid, 2,3-diaminopropionic acid, guvacine and nipecotic acid. Beta-alanine transport is inhibited by GABA. Taurine transport is inhibited by GABA, beta-alanine, SNAP-5114, nigericin, nipecotic acid and ouabain. Its function is as follows. Mediates sodium- and chloride-dependent transport of gamma-aminobutyric acid (GABA). Can also mediate transport of beta-alanine, taurine and hypotaurine and is the major taurine transporter in hepatocytes. This Mus musculus (Mouse) protein is Sodium- and chloride-dependent GABA transporter 2 (Slc6a13).